Here is a 330-residue protein sequence, read N- to C-terminus: tRNA U34 carboxymethyltransferase (330 aa).

Residues K91, W105, K110, G130, 152–154 (DPS), 181–182 (IE), M196, Y200, and R315 each bind carboxy-S-adenosyl-L-methionine.

Belongs to the class I-like SAM-binding methyltransferase superfamily. CmoB family. Homotetramer.

It catalyses the reaction carboxy-S-adenosyl-L-methionine + 5-hydroxyuridine(34) in tRNA = 5-carboxymethoxyuridine(34) in tRNA + S-adenosyl-L-homocysteine + H(+). Its function is as follows. Catalyzes carboxymethyl transfer from carboxy-S-adenosyl-L-methionine (Cx-SAM) to 5-hydroxyuridine (ho5U) to form 5-carboxymethoxyuridine (cmo5U) at position 34 in tRNAs. This is tRNA U34 carboxymethyltransferase from Shewanella piezotolerans (strain WP3 / JCM 13877).